Reading from the N-terminus, the 293-residue chain is Large ribosomal subunit protein uL18 (293 aa).

Positions 247 to 263 (IRANPAHEKKQPRDGLV) are enriched in basic and acidic residues. The tract at residues 247–283 (IRANPAHEKKQPRDGLVKKRWNRAKMSLKQKRDRVKQ) is disordered. Basic residues predominate over residues 264–283 (KKRWNRAKMSLKQKRDRVKQ).

Belongs to the universal ribosomal protein uL18 family. In terms of assembly, component of the large ribosomal subunit (LSU).

The protein localises to the cytoplasm. It is found in the nucleus. Component of the ribosome, a large ribonucleoprotein complex responsible for the synthesis of proteins in the cell. The small ribosomal subunit (SSU) binds messenger RNAs (mRNAs) and translates the encoded message by selecting cognate aminoacyl-transfer RNA (tRNA) molecules. The large subunit (LSU) contains the ribosomal catalytic site termed the peptidyl transferase center (PTC), which catalyzes the formation of peptide bonds, thereby polymerizing the amino acids delivered by tRNAs into a polypeptide chain. The nascent polypeptides leave the ribosome through a tunnel in the LSU and interact with protein factors that function in enzymatic processing, targeting, and the membrane insertion of nascent chains at the exit of the ribosomal tunnel. This chain is Large ribosomal subunit protein uL18 (RPL5), found in Suberites domuncula (Sponge).